The primary structure comprises 415 residues: Putative O-antigen transporter (415 aa).

Topologically, residues 1-11 (MNTNKLSLRRN) are cytoplasmic. A helical membrane pass occupies residues 12 to 32 (VIYLAVVQGSNYLLPLLTFPY). The Periplasmic portion of the chain corresponds to 33–41 (LVRTLGPEN). The chain crosses the membrane as a helical span at residues 42–62 (FGIFGFCQATMLYMIMFVEYG). Residues 63–83 (FNLTATQSIAKAADSKDKVTS) lie on the Cytoplasmic side of the membrane. A helical membrane pass occupies residues 84 to 104 (IFWAVIFSKIVLIVITLIFLT). The Periplasmic portion of the chain corresponds to 105-117 (SMTLLVPEYNKHA). Residues 118 to 138 (VIIWSFVPALVGNLIYPIWLF) traverse the membrane as a helical segment. Over 139–173 (QGKEKMKWLTLSSILSRLAIIPLTFIFVNTKSDIA) the chain is Cytoplasmic. A helical membrane pass occupies residues 174–194 (IAGFIQSSANLVAGIIALAIV). Residues 195 to 220 (VHEGWIGKVTLSLHNVRRSLADGFHV) are Periplasmic-facing. A helical transmembrane segment spans residues 221–241 (FISTSAISLYSTGIVIILGFI). The Cytoplasmic portion of the chain corresponds to 242 to 295 (SGPTSVGNFNAANTIRNALQGLLNPITQAIYPRISSTLVLNRVKGVILIKKSLT). Residues 296–316 (CLSLIGGAFSLILLLGASILV) form a helical membrane-spanning segment. Over 317–328 (KISIGPGYDNAV) the chain is Periplasmic. Residues 329 to 349 (IVLMIISPLPFLISLSNVYGI) form a helical membrane-spanning segment. The Cytoplasmic segment spans residues 350–362 (QVMLTHNYKKEFS). Residues 363–383 (KILIAAGLLSLLLIFPLTTLF) traverse the membrane as a helical segment. The Periplasmic portion of the chain corresponds to 384–385 (KE). Residues 386 to 406 (IGAAITLLATECLVTSLMLMF) traverse the membrane as a helical segment. Residues 407-415 (VRNNKLLVC) are Cytoplasmic-facing.

Belongs to the polysaccharide synthase family.

The protein resides in the cell inner membrane. The protein operates within bacterial outer membrane biogenesis; LPS O-antigen biosynthesis. Functionally, may be involved in the translocation process of the nascent O-polysaccharide molecules and/or its ligation to lipid A core units. The protein is Putative O-antigen transporter (rfbX) of Escherichia coli (strain K12).